Consider the following 349-residue polypeptide: UDP-3-O-acylglucosamine N-acyltransferase (349 aa).

Residue histidine 246 is the Proton acceptor of the active site.

Belongs to the transferase hexapeptide repeat family. LpxD subfamily. As to quaternary structure, homotrimer.

It catalyses the reaction a UDP-3-O-[(3R)-3-hydroxyacyl]-alpha-D-glucosamine + a (3R)-hydroxyacyl-[ACP] = a UDP-2-N,3-O-bis[(3R)-3-hydroxyacyl]-alpha-D-glucosamine + holo-[ACP] + H(+). It participates in bacterial outer membrane biogenesis; LPS lipid A biosynthesis. Catalyzes the N-acylation of UDP-3-O-acylglucosamine using 3-hydroxyacyl-ACP as the acyl donor. Is involved in the biosynthesis of lipid A, a phosphorylated glycolipid that anchors the lipopolysaccharide to the outer membrane of the cell. This chain is UDP-3-O-acylglucosamine N-acyltransferase, found in Nostoc sp. (strain PCC 7120 / SAG 25.82 / UTEX 2576).